A 775-amino-acid polypeptide reads, in one-letter code: 1,4-alpha-glucan branching enzyme GlgB (775 aa).

Aspartate 431 acts as the Nucleophile in catalysis. Catalysis depends on glutamate 484, which acts as the Proton donor.

It belongs to the glycosyl hydrolase 13 family. GlgB subfamily. In terms of assembly, monomer.

It carries out the reaction Transfers a segment of a (1-&gt;4)-alpha-D-glucan chain to a primary hydroxy group in a similar glucan chain.. Its pathway is glycan biosynthesis; glycogen biosynthesis. Its function is as follows. Catalyzes the formation of the alpha-1,6-glucosidic linkages in glycogen by scission of a 1,4-alpha-linked oligosaccharide from growing alpha-1,4-glucan chains and the subsequent attachment of the oligosaccharide to the alpha-1,6 position. This chain is 1,4-alpha-glucan branching enzyme GlgB, found in Parasynechococcus marenigrum (strain WH8102).